The following is a 108-amino-acid chain: Large ribosomal subunit protein uL24 (108 aa).

The protein belongs to the universal ribosomal protein uL24 family. As to quaternary structure, part of the 50S ribosomal subunit.

Its function is as follows. One of two assembly initiator proteins, it binds directly to the 5'-end of the 23S rRNA, where it nucleates assembly of the 50S subunit. Functionally, one of the proteins that surrounds the polypeptide exit tunnel on the outside of the subunit. This chain is Large ribosomal subunit protein uL24, found in Geobacter sulfurreducens (strain ATCC 51573 / DSM 12127 / PCA).